Consider the following 80-residue polypeptide: Saposin-B-Val (80 aa).

The 80-residue stretch at 1-80 (GDVCQDCIQM…CGLVGFCEEV (80 aa)) folds into the Saposin B-type domain. Disulfide bonds link C4/C77, C7/C71, and C36/C47. The N-linked (GlcNAc...) (complex) asparagine glycan is linked to N21.

As to quaternary structure, saposin-B is a homodimer. Interacts with GRN; facilitates lysosomal delivery of progranulin from the extracellular space and the biosynthetic pathway. The one residue extended Saposin-B-Val is only found in a minority of the chains.

Functionally, saposin-B stimulates the hydrolysis of galacto-cerebroside sulfate by arylsulfatase A (EC 3.1.6.8), GM1 gangliosides by beta-galactosidase (EC 3.2.1.23) and globotriaosylceramide by alpha-galactosidase A (EC 3.2.1.22). Saposin-B forms a solubilizing complex with the substrates of the sphingolipid hydrolases. The sequence is that of Saposin-B-Val (PSAP) from Sus scrofa (Pig).